A 474-amino-acid chain; its full sequence is MNLAVAAALPSVTPRTGVVLPRSSRRHCPRGVVPRAASSSVSSFTSPSAAAAPIYTPTPQDRSLRTPHSGYHFDGTARPFFEGWYFKVSIPECRQSFCFMYSVENPLFRDGMSDLDKLLYRPRFTGVGAQILGADDKYICQFSEKSNNFWGSRHELMLGNTFISNKESTPPQGEVPPQDFSRRVLEGFQVTPIWHQGFIRDDGRSNYVPNVQTARWEYSTRPVYGWGDVKSKQLSTAGWLAAFPFFEPHWQICMASGLSTGWIEWDGERFEFENAPSYSEKNWGGGFPRKWYWIQCNVFPGASGEVSLTAAGGLRKIGLGDTYESPSLIGIHYEGQFFEFVPWTGTVSWDIGLWGLWKMSGENKTHLVEIEATTAESGTALRAPTIEAGLVPACKDTCYGDLRLQLWEKKYDGSKGEMILDATSNMAALEVGGGPWFNGWKGTTVVNEVVNNIVGTPVDVESLLPIPFLKPPGL.

The transit peptide at 1 to 65 (MNLAVAAALP…TPTPQDRSLR (65 aa)) directs the protein to the chloroplast.

As to expression, present in all green tissues, both in bundle sheath and in mesophyll cells.

Its subcellular location is the plastid. It is found in the chloroplast. The catalysed reaction is gamma-tocopherol = 2,3-dimethyl-6-phytylbenzene-1,4-diol. It participates in cofactor biosynthesis; tocopherol biosynthesis. Functionally, involved in the synthesis of tocopherols (vitamin E), which presumably protect photosynthetic complexes from oxidative stress. Catalyzes the conversion of 2,3-dimethyl-5-phytyl-1,4-hydroquinone (DMPQ) to gamma-tocopherol. This Zea mays (Maize) protein is Tocopherol cyclase, chloroplastic.